A 506-amino-acid chain; its full sequence is Bifunctional purine biosynthesis protein PurH (506 aa).

Positions 1 to 142 constitute an MGS-like domain; sequence MRAIISVYRK…KNFFRVVILV (142 aa).

Belongs to the PurH family.

It carries out the reaction (6R)-10-formyltetrahydrofolate + 5-amino-1-(5-phospho-beta-D-ribosyl)imidazole-4-carboxamide = 5-formamido-1-(5-phospho-D-ribosyl)imidazole-4-carboxamide + (6S)-5,6,7,8-tetrahydrofolate. The enzyme catalyses IMP + H2O = 5-formamido-1-(5-phospho-D-ribosyl)imidazole-4-carboxamide. It participates in purine metabolism; IMP biosynthesis via de novo pathway; 5-formamido-1-(5-phospho-D-ribosyl)imidazole-4-carboxamide from 5-amino-1-(5-phospho-D-ribosyl)imidazole-4-carboxamide (10-formyl THF route): step 1/1. Its pathway is purine metabolism; IMP biosynthesis via de novo pathway; IMP from 5-formamido-1-(5-phospho-D-ribosyl)imidazole-4-carboxamide: step 1/1. This Aquifex aeolicus (strain VF5) protein is Bifunctional purine biosynthesis protein PurH.